A 289-amino-acid chain; its full sequence is Proteasome assembly chaperone 1 (289 aa).

Residues 1 to 38 form a disordered region; it reads MAATFFGEVVKAPCRAGTEEEEEEEEQSRRDTPEDREV. N-acetylalanine is present on A2. Phosphothreonine is present on T18. Residues 27–38 show a composition bias toward basic and acidic residues; that stretch reads QSRRDTPEDREV. The residue at position 55 (T55) is a Phosphothreonine. At S181 the chain carries Phosphoserine. Residue K265 is modified to N6-acetyllysine.

The protein belongs to the PSMG1 family. In terms of assembly, forms a heterodimer with PSMG2. The PSMG1-PSMG2 heterodimer interacts directly with the PSMA5 and PSMA7 proteasome alpha subunits. In terms of processing, degraded by the proteasome upon completion of 20S proteasome maturation. Highly expressed in testis with moderate expression in brain, liver and kidney and low levels in heart, skeletal muscle and pancreas.

The protein resides in the cytoplasm. The protein localises to the endoplasmic reticulum. Its function is as follows. Chaperone protein which promotes assembly of the 20S proteasome as part of a heterodimer with PSMG2. The PSMG1-PSMG2 heterodimer binds to the PSMA5 and PSMA7 proteasome subunits, promotes assembly of the proteasome alpha subunits into the heteroheptameric alpha ring and prevents alpha ring dimerization. This is Proteasome assembly chaperone 1 from Mus musculus (Mouse).